The primary structure comprises 148 residues: NTR domain-containing protein (148 aa).

The signal sequence occupies residues 1–26 (MVCRFSYVQVVLILVVLSVIISWANA). Cystine bridges form between C27–C96, C29–C122, and C40–C146. An NTR domain is found at 27–146 (CSCFPPDETR…LQLFNDPQWC (120 aa)).

As to expression, prismatic layer of shell (at protein level). Expressed primarily in the mantle with highest level in the mantle edge and lower level in the mantle pallium.

Its subcellular location is the secreted. This is NTR domain-containing protein from Margaritifera margaritifera (Freshwater pearl mussel).